Consider the following 665-residue polypeptide: Methionine--tRNA ligase (665 aa).

Positions 13-23 (YYPSGKLHIGS) match the 'HIGH' region motif. The 'KMSKS' region signature appears at 309–313 (KMSKS). K312 is an ATP binding site. A tRNA-binding domain is found at 562 to 665 (DFDKVEIRVA…PAVPNGSVIG (104 aa)).

The protein belongs to the class-I aminoacyl-tRNA synthetase family. MetG type 2B subfamily. Homodimer.

The protein localises to the cytoplasm. It carries out the reaction tRNA(Met) + L-methionine + ATP = L-methionyl-tRNA(Met) + AMP + diphosphate. Is required not only for elongation of protein synthesis but also for the initiation of all mRNA translation through initiator tRNA(fMet) aminoacylation. This chain is Methionine--tRNA ligase (metG), found in Streptococcus pneumoniae serotype 4 (strain ATCC BAA-334 / TIGR4).